We begin with the raw amino-acid sequence, 873 residues long: Leucine--tRNA ligase (873 aa).

The 'HIGH' region motif lies at 48 to 58 (PYPSGKLHMGH). Residues 636–640 (KMSKS) carry the 'KMSKS' region motif. Lys-639 contributes to the ATP binding site.

The protein belongs to the class-I aminoacyl-tRNA synthetase family.

The protein resides in the cytoplasm. It carries out the reaction tRNA(Leu) + L-leucine + ATP = L-leucyl-tRNA(Leu) + AMP + diphosphate. This is Leucine--tRNA ligase from Cupriavidus metallidurans (strain ATCC 43123 / DSM 2839 / NBRC 102507 / CH34) (Ralstonia metallidurans).